A 526-amino-acid polypeptide reads, in one-letter code: Glucomannan 4-beta-mannosyltransferase 1 (526 aa).

The chain crosses the membrane as a helical span at residues 31-51 (VIIPLLKLAVIVCSVMSIMLF). Residue Asp130 is part of the active site. 2 residues coordinate substrate: Asp189 and Asp191. The active site involves Asp283. 4 helical membrane passes run 362–382 (IVAHWVTFFFYCIVIPACVIV), 399–419 (ITILNAVSTPRSMHLLVLWIL), 477–497 (PLEIIVGMYMLHCATYDLLFG), and 501–521 (FFVYLLLQAGAFFTMGFGLVG).

It belongs to the glycosyltransferase 2 family. Plant cellulose synthase-like A subfamily.

The protein localises to the golgi apparatus membrane. It carries out the reaction GDP-mannose + (glucomannan)n = GDP + (glucomannan)n+1.. Its function is as follows. Possesses 4-beta-mannosyltransferase activity on mannan using GDP-mannose. The beta-1,4-mannan product is the backbone for galactomannan synthesis by galactomannan galactosyltransferase. The galactomannan is a hemicellulosic storage polysaccharide accumulated in the form of secondary wall thickenings in the seed endosperm. In Cyamopsis tetragonoloba (Guar), this protein is Glucomannan 4-beta-mannosyltransferase 1.